The sequence spans 192 residues: Ion-translocating oxidoreductase complex subunit B (192 aa).

Positions 1–26 are hydrophobic; that stretch reads MNTIWIAVGALTLLGLVFGAILGYAS. Residues 32-91 form the 4Fe-4S domain; sequence EDDPVVEKIDAILPQSQCGQCGYPGCRPYAEAVGLQGEKINRCAPGGEAVMLKMAELLNV. Residues Cys49, Cys52, Cys57, Cys74, Cys117, Cys120, Cys123, Cys127, Cys147, Cys150, Cys153, and Cys157 each contribute to the [4Fe-4S] cluster site. 4Fe-4S ferredoxin-type domains are found at residues 108 to 137 and 138 to 167; these read MLAV…GATR and AMHT…LRPV.

It belongs to the 4Fe4S bacterial-type ferredoxin family. RnfB subfamily. In terms of assembly, the complex is composed of six subunits: RsxA, RsxB, RsxC, RsxD, RsxE and RsxG. The cofactor is [4Fe-4S] cluster.

It localises to the cell inner membrane. Its function is as follows. Part of a membrane-bound complex that couples electron transfer with translocation of ions across the membrane. Required to maintain the reduced state of SoxR. The sequence is that of Ion-translocating oxidoreductase complex subunit B from Salmonella agona (strain SL483).